The following is a 254-amino-acid chain: Ribonuclease HII (254 aa).

In terms of domain architecture, RNase H type-2 spans 67 to 254 (IVIAGVDEVG…HRMSFLKNII (188 aa)). A divalent metal cation-binding residues include Asp73, Glu74, and Asp170.

Belongs to the RNase HII family. Mn(2+) serves as cofactor. Mg(2+) is required as a cofactor.

Its subcellular location is the cytoplasm. It carries out the reaction Endonucleolytic cleavage to 5'-phosphomonoester.. In terms of biological role, endonuclease that specifically degrades the RNA of RNA-DNA hybrids. The polypeptide is Ribonuclease HII (Clostridium acetobutylicum (strain ATCC 824 / DSM 792 / JCM 1419 / IAM 19013 / LMG 5710 / NBRC 13948 / NRRL B-527 / VKM B-1787 / 2291 / W)).